Here is a 201-residue protein sequence, read N- to C-terminus: Sterile alpha motif domain-containing protein 12 (201 aa).

The SAM domain occupies 77–143; sequence WTQQDVCKWL…LQQVLQLKVR (67 aa).

As to expression, expressed in the brain.

The protein is Sterile alpha motif domain-containing protein 12 (SAMD12) of Homo sapiens (Human).